The sequence spans 888 residues: Endochitinase A1 (888 aa).

The N-terminal stretch at 1–22 (MVSSKLSFVATAVAALAPLASA) is a signal peptide. The GH18 domain maps to 29–338 (SNLAIYWGQG…DHMKDILLHC (310 aa)). E174 (proton donor) is an active-site residue. Disordered regions lie at residues 338 to 631 (CDPS…TTTA), 743 to 799 (PVTE…VSTS), and 813 to 855 (PLIL…YTQE). The span at 344-617 (VTSSSAIPSS…STDESSTTVG (274 aa)) shows a compositional bias: low complexity. N-linked (GlcNAc...) asparagine glycosylation occurs at N622. Polar residues predominate over residues 764–775 (EGSNPTQPSGAS). N-linked (GlcNAc...) asparagine glycosylation occurs at N780. Residues 835-855 (PSGQNSGSSSHVPIPPSYTQE) show a composition bias toward polar residues. G863 carries the GPI-anchor amidated glycine lipid modification. The propeptide at 864-888 (AASRVTGLGHGLVLTVLTLSAFFVL) is removed in mature form.

The protein belongs to the glycosyl hydrolase 18 family. Chitinase class III subfamily.

The protein resides in the cell membrane. It localises to the secreted. Its subcellular location is the cell wall. The catalysed reaction is Random endo-hydrolysis of N-acetyl-beta-D-glucosaminide (1-&gt;4)-beta-linkages in chitin and chitodextrins.. The cyclic peptide natural product argifin acts as a specific inhibitor. GPI-anchored chitinase involved in the degradation of chitin, a component of the cell walls of fungi and exoskeletal elements of some animals (including worms and arthropods). Required to reshape the cell wall at the sites where cell wall remodeling and/or cell wall maturation actively take place such as sites of conidia formation. This chain is Endochitinase A1 (chiA1), found in Aspergillus fumigatus (strain ATCC MYA-4609 / CBS 101355 / FGSC A1100 / Af293) (Neosartorya fumigata).